Reading from the N-terminus, the 542-residue chain is Chaperonin GroEL (542 aa).

Residues 29 to 32 (TLGP), 86 to 90 (DGTTT), Gly-413, and Asp-492 contribute to the ATP site.

This sequence belongs to the chaperonin (HSP60) family. In terms of assembly, forms a cylinder of 14 subunits composed of two heptameric rings stacked back-to-back. Interacts with the co-chaperonin GroES.

The protein resides in the cytoplasm. The enzyme catalyses ATP + H2O + a folded polypeptide = ADP + phosphate + an unfolded polypeptide.. Together with its co-chaperonin GroES, plays an essential role in assisting protein folding. The GroEL-GroES system forms a nano-cage that allows encapsulation of the non-native substrate proteins and provides a physical environment optimized to promote and accelerate protein folding. In Nocardia asteroides, this protein is Chaperonin GroEL.